Here is a 453-residue protein sequence, read N- to C-terminus: Tryptophan biosynthesis protein TrpCF (453 aa).

An indole-3-glycerol phosphate synthase region spans residues 1–257 (MMQTVLAKIV…AAVRRVLLGE (257 aa)). Residues 258–453 (NKVCGLTRGQ…ASVFQTLRAY (196 aa)) are N-(5'-phosphoribosyl)anthranilate isomerase.

It in the N-terminal section; belongs to the TrpC family. The protein in the C-terminal section; belongs to the TrpF family. As to quaternary structure, monomer.

The enzyme catalyses N-(5-phospho-beta-D-ribosyl)anthranilate = 1-(2-carboxyphenylamino)-1-deoxy-D-ribulose 5-phosphate. It carries out the reaction 1-(2-carboxyphenylamino)-1-deoxy-D-ribulose 5-phosphate + H(+) = (1S,2R)-1-C-(indol-3-yl)glycerol 3-phosphate + CO2 + H2O. It participates in amino-acid biosynthesis; L-tryptophan biosynthesis; L-tryptophan from chorismate: step 3/5. Its pathway is amino-acid biosynthesis; L-tryptophan biosynthesis; L-tryptophan from chorismate: step 4/5. In terms of biological role, bifunctional enzyme that catalyzes two sequential steps of tryptophan biosynthetic pathway. The first reaction is catalyzed by the isomerase, coded by the TrpF domain; the second reaction is catalyzed by the synthase, coded by the TrpC domain. This chain is Tryptophan biosynthesis protein TrpCF (trpC), found in Escherichia coli (strain K12).